The chain runs to 235 residues: Ribosomal RNA small subunit methyltransferase G (235 aa).

Residues Gly74, Leu79, 124-125 (AE), and Arg142 each bind S-adenosyl-L-methionine. The interval 211-235 (RRRAAKPGRNKSGRTARSRGRTGRR) is disordered. Over residues 213 to 235 (RAAKPGRNKSGRTARSRGRTGRR) the composition is skewed to basic residues.

It belongs to the methyltransferase superfamily. RNA methyltransferase RsmG family.

The protein localises to the cytoplasm. Specifically methylates the N7 position of guanine in position 518 of 16S rRNA. The sequence is that of Ribosomal RNA small subunit methyltransferase G from Mycolicibacterium smegmatis (strain ATCC 700084 / mc(2)155) (Mycobacterium smegmatis).